We begin with the raw amino-acid sequence, 459 residues long: MLKIYNSISRQKEEFKPIQPGKIGMYVCGVTIYDLCHIGHGRTFVCFDMIVRYLRYRGYEVNYQRNITDVDDKIIKRANENGESCDSLTERLIGEMHADFDALNMVRPSFEPRATLHIDEIIDMVTRLLDRGHAYVAADGDVLFDVSSYAAYGRLSGQDLEQLQAGARVEVDENKRNPMDFVLWKMSKPGEPTWDSPWGPGRPGWHIECSAMNSKHLGLHFDIHGGGSDLQFPHHENEIAQSCCAHDTPYVNTWMHTGMVMVDREKMSKSLGNFFTIRDVLAHYDAQTVRYFLLSGHYRSQLNYSEDNLKQARASLERMYTALKGLDLTVEAAGADEFVSRFMAAMDDDFNTPEAYSVLFDMVREINRLKTSDMAAASQLGVALKELAEVLGILSSTPEAFLQGEGNADEVAEIEALIVERNRARAEKDWPAADVARDRLNALGVVLEDGPEGTTWRKK.

Cys28 provides a ligand contact to Zn(2+). The 'HIGH' region motif lies at 30 to 40 (VTIYDLCHIGH). Positions 209, 234, and 238 each coordinate Zn(2+). Positions 266–270 (KMSKS) match the 'KMSKS' region motif. Residue Lys269 participates in ATP binding.

The protein belongs to the class-I aminoacyl-tRNA synthetase family. In terms of assembly, monomer. Zn(2+) serves as cofactor.

Its subcellular location is the cytoplasm. The enzyme catalyses tRNA(Cys) + L-cysteine + ATP = L-cysteinyl-tRNA(Cys) + AMP + diphosphate. The chain is Cysteine--tRNA ligase from Shewanella amazonensis (strain ATCC BAA-1098 / SB2B).